Here is a 652-residue protein sequence, read N- to C-terminus: uncharacterized protein (652 aa).

Basic and acidic residues predominate over residues Met-1–Lys-13. Residues Met-1 to Thr-21 form a disordered region.

This sequence belongs to the ParB family.

This is an uncharacterized protein from Escherichia coli (strain K12).